The sequence spans 190 residues: Pancreatic IgW, short secretory form (190 aa).

The Ig-like C1-type domain occupies 53–145; it reads PNITALVPSV…PPSNFRSMIS (93 aa). N-linked (GlcNAc...) asparagine glycosylation occurs at N54. Cysteines 74 and 131 form a disulfide. N179 is a glycosylation site (N-linked (GlcNAc...) asparagine).

In terms of tissue distribution, expressed in pancreas, spleen, epigonal organ and at low levels in several other tissues.

The protein resides in the secreted. This chain is Pancreatic IgW, short secretory form, found in Ginglymostoma cirratum (Nurse shark).